The following is a 561-amino-acid chain: DNA ligase B (561 aa).

Lys-125 functions as the N6-AMP-lysine intermediate in the catalytic mechanism.

This sequence belongs to the NAD-dependent DNA ligase family. LigB subfamily.

The catalysed reaction is NAD(+) + (deoxyribonucleotide)n-3'-hydroxyl + 5'-phospho-(deoxyribonucleotide)m = (deoxyribonucleotide)n+m + AMP + beta-nicotinamide D-nucleotide.. Functionally, catalyzes the formation of phosphodiester linkages between 5'-phosphoryl and 3'-hydroxyl groups in double-stranded DNA using NAD as a coenzyme and as the energy source for the reaction. In Salmonella schwarzengrund (strain CVM19633), this protein is DNA ligase B.